The primary structure comprises 327 residues: Pectate lyase A (327 aa).

The signal sequence occupies residues 1–19 (MQNLKFLIAAVSCLGPALA). A glycan (N-linked (GlcNAc...) asparagine) is linked at Asn-99. 3 residues coordinate Ca(2+): Asp-140, Asp-169, and Asp-173. Arg-226 is a catalytic residue.

The protein belongs to the polysaccharide lyase 1 family. The cofactor is Ca(2+).

Its subcellular location is the secreted. It carries out the reaction Eliminative cleavage of (1-&gt;4)-alpha-D-galacturonan to give oligosaccharides with 4-deoxy-alpha-D-galact-4-enuronosyl groups at their non-reducing ends.. In terms of biological role, pectinolytic enzyme consist of four classes of enzymes: pectin lyase, polygalacturonase, pectin methylesterase and rhamnogalacturonase. Among pectinolytic enzymes, pectin lyase is the most important in depolymerization of pectin, since it cleaves internal glycosidic bonds of highly methylated pectins. Favors pectate, the anion, over pectin, the methyl ester. The protein is Pectate lyase A (plyA) of Emericella nidulans (strain FGSC A4 / ATCC 38163 / CBS 112.46 / NRRL 194 / M139) (Aspergillus nidulans).